The sequence spans 219 residues: UPF0502 protein GSU0233 (219 aa).

This sequence belongs to the UPF0502 family.

The polypeptide is UPF0502 protein GSU0233 (Geobacter sulfurreducens (strain ATCC 51573 / DSM 12127 / PCA)).